The primary structure comprises 170 residues: ATP synthase subunit b (170 aa).

Residues 20 to 42 (QLLAMLVLLALLKKFALGPLLNI) form a helical membrane-spanning segment.

This sequence belongs to the ATPase B chain family. F-type ATPases have 2 components, F(1) - the catalytic core - and F(0) - the membrane proton channel. F(1) has five subunits: alpha(3), beta(3), gamma(1), delta(1), epsilon(1). F(0) has three main subunits: a(1), b(2) and c(10-14). The alpha and beta chains form an alternating ring which encloses part of the gamma chain. F(1) is attached to F(0) by a central stalk formed by the gamma and epsilon chains, while a peripheral stalk is formed by the delta and b chains.

Its subcellular location is the cell membrane. Functionally, f(1)F(0) ATP synthase produces ATP from ADP in the presence of a proton or sodium gradient. F-type ATPases consist of two structural domains, F(1) containing the extramembraneous catalytic core and F(0) containing the membrane proton channel, linked together by a central stalk and a peripheral stalk. During catalysis, ATP synthesis in the catalytic domain of F(1) is coupled via a rotary mechanism of the central stalk subunits to proton translocation. In terms of biological role, component of the F(0) channel, it forms part of the peripheral stalk, linking F(1) to F(0). The protein is ATP synthase subunit b of Bacillus velezensis (strain DSM 23117 / BGSC 10A6 / LMG 26770 / FZB42) (Bacillus amyloliquefaciens subsp. plantarum).